Here is a 508-residue protein sequence, read N- to C-terminus: Fc receptor-like protein 2 (508 aa).

The N-terminal stretch at 1–19 (MLLWSLLVIFDAVTEQADS) is a signal peptide. 4 Ig-like C2-type domains span residues 20–98 (LTLV…SNIV), 109–187 (PVLT…HRIR), 201–290 (PISN…KVVN), and 300–387 (PVLT…VSIS). Over 20–401 (LTLVAPSSVF…YRRDLMTAGV (382 aa)) the chain is Extracellular. Residues Cys-128 and Cys-177 are joined by a disulfide bond. Residues Asn-204, Asn-234, Asn-343, Asn-355, and Asn-365 are each glycosylated (N-linked (GlcNAc...) asparagine). 2 cysteine pairs are disulfide-bonded: Cys-226–Cys-275 and Cys-321–Cys-368. The helical transmembrane segment at 402 to 422 (LWGLFGVLGFTGVALLLYALF) threads the bilayer. At 423 to 508 (HKISGESSAT…QVIYSSVKKS (86 aa)) the chain is on the cytoplasmic side. Residues 429-453 (SSATNEPRGASRPNPQEFTYSSPTP) are disordered. Residues 441–452 (PNPQEFTYSSPT) show a composition bias toward polar residues. Short sequence motifs (ITIM motif) lie at residues 446 to 451 (FTYSSP), 460 to 465 (PVYVNV), 472 to 477 (VVYSQV), and 500 to 505 (VIYSSV).

The tyrosine-phosphorylated isoform 2 interacts with PTPN6. Isoform 2 is N- and O-glycosylated, and phosphorylated. Expressed in the secondary lymphoid organs, spleen and lymph node. Expression is limited to the mature B-cell lines. Highly expressed in CD19 and within the mantle zones of the tonsil tissue. Isoform 2 is expressed in the spleen, peripheral blood and bone marrow. Isoform 2 and isoform 4 are expressed in B-cell lines. Preferentially expressed in memory B-cells (at protein level).

It is found in the cell membrane. May have an regulatory role in normal and neoplastic B cell development. This is Fc receptor-like protein 2 (FCRL2) from Homo sapiens (Human).